Here is a 402-residue protein sequence, read N- to C-terminus: MTEALGTETPGMRNFTINFGPQHPAAHGVLRLVLELDGEVVERVDPHIGLLHRGTEKLIEQKTYLQAIPYFDRLDYVAPMNQEHAFCLAAEKLLGIAVPRRGQLIRVLYCEIGRILSHLLNVTTQALDVGALTPPLWGFEEREKLMMFYERASGSRMHAAYFRIGGVHQDLPPKLIDDIDAWCDPFLQVVADLDALLTDSRIFKQRNVDIGVVSLKQAWEWGFSGVMVRGSGAAWDLRKAQPYECYAEMDFDIPIGKNGDCYDRYLIRMEEMRQSARIMKQCIAKLRAADGQGPVAVEDNKIFPPRRAEMKRSMEALIHHFKLYTEGFRVPAGEVYAAVEAPKGEFGVFLVSDGSNKPYKCKIRAPGFAHLQAMDFICRGHLLADVSAILGSLDIVFGEVDR.

This sequence belongs to the complex I 49 kDa subunit family. NDH-1 is composed of 14 different subunits. Subunits NuoB, C, D, E, F, and G constitute the peripheral sector of the complex.

It localises to the cell inner membrane. The enzyme catalyses a quinone + NADH + 5 H(+)(in) = a quinol + NAD(+) + 4 H(+)(out). In terms of biological role, NDH-1 shuttles electrons from NADH, via FMN and iron-sulfur (Fe-S) centers, to quinones in the respiratory chain. The immediate electron acceptor for the enzyme in this species is believed to be ubiquinone. Couples the redox reaction to proton translocation (for every two electrons transferred, four hydrogen ions are translocated across the cytoplasmic membrane), and thus conserves the redox energy in a proton gradient. The polypeptide is NADH-quinone oxidoreductase subunit D 2 (Nitrobacter hamburgensis (strain DSM 10229 / NCIMB 13809 / X14)).